Here is a 91-residue protein sequence, read N- to C-terminus: Large ribosomal subunit protein eL37 (91 aa).

The Zn(2+) site is built by Cys-19, Cys-22, Cys-34, and Cys-37. The C4-type zinc-finger motif lies at 19-37 (CKRCGKSSFHIQKKRCASC).

This sequence belongs to the eukaryotic ribosomal protein eL37 family. Zn(2+) is required as a cofactor.

Binds to the 23S rRNA. This is Large ribosomal subunit protein eL37 from Caenorhabditis elegans.